The chain runs to 282 residues: Pantothenate synthetase (282 aa).

Residue 30–37 participates in ATP binding; sequence MGYLHEGH. Histidine 37 acts as the Proton donor in catalysis. Glutamine 61 is a binding site for (R)-pantoate. Glutamine 61 contributes to the beta-alanine binding site. 147-150 is an ATP binding site; it reads GMKD. Glutamine 153 is a binding site for (R)-pantoate. ATP contacts are provided by residues valine 176 and 184-187; that span reads KSSR.

Belongs to the pantothenate synthetase family. Homodimer.

The protein resides in the cytoplasm. The enzyme catalyses (R)-pantoate + beta-alanine + ATP = (R)-pantothenate + AMP + diphosphate + H(+). Its pathway is cofactor biosynthesis; (R)-pantothenate biosynthesis; (R)-pantothenate from (R)-pantoate and beta-alanine: step 1/1. In terms of biological role, catalyzes the condensation of pantoate with beta-alanine in an ATP-dependent reaction via a pantoyl-adenylate intermediate. The sequence is that of Pantothenate synthetase from Geobacillus sp. (strain WCH70).